We begin with the raw amino-acid sequence, 218 residues long: Capsid protein (218 aa).

An N-acetylmethionine; by host modification is found at Met1. The disordered stretch occupies residues 1–29; sequence MDKSESTSAGRNHRRRPRRGSRSAPSSAD. The segment covering 11–21 has biased composition (basic residues); the sequence is RNHRRRPRRGS.

This sequence belongs to the cucumovirus capsid protein family.

The protein localises to the virion. Its function is as follows. Capsid protein. Probably binds RNA and plays a role in packaging. This Cucumber mosaic virus (strain C) (CMV) protein is Capsid protein.